A 521-amino-acid polypeptide reads, in one-letter code: 2-isopropylmalate synthase (521 aa).

Residues 12–274 form the Pyruvate carboxyltransferase domain; the sequence is VIIFDTTLRD…WNKIDTTMLT (263 aa). Mn(2+) is bound by residues aspartate 21, histidine 209, histidine 211, and asparagine 245. The interval 398 to 521 is regulatory domain; it reads KLLSLTVIAG…DLPVPEAAAS (124 aa).

Belongs to the alpha-IPM synthase/homocitrate synthase family. LeuA type 1 subfamily. Homodimer. Mn(2+) serves as cofactor.

It localises to the cytoplasm. The enzyme catalyses 3-methyl-2-oxobutanoate + acetyl-CoA + H2O = (2S)-2-isopropylmalate + CoA + H(+). It functions in the pathway amino-acid biosynthesis; L-leucine biosynthesis; L-leucine from 3-methyl-2-oxobutanoate: step 1/4. Functionally, catalyzes the condensation of the acetyl group of acetyl-CoA with 3-methyl-2-oxobutanoate (2-ketoisovalerate) to form 3-carboxy-3-hydroxy-4-methylpentanoate (2-isopropylmalate). The chain is 2-isopropylmalate synthase from Rhodopseudomonas palustris (strain BisB18).